The following is a 928-amino-acid chain: DNA polymerase I (928 aa).

The region spanning 1–323 (MVQIPQNPLI…ADEAPEVTAT (323 aa)) is the 5'-3' exonuclease domain. The 3'-5' exonuclease domain maps to 324 to 517 (VISYDNYVTI…LHLKMWPDLQ (194 aa)). A klenow fragment region spans residues 324 to 928 (VISYDNYVTI…GSGENWDQAH (605 aa)). Positions 521 to 928 (GPLNVFENIE…GSGENWDQAH (408 aa)) are polymerase.

Belongs to the DNA polymerase type-A family. Single-chain monomer with multiple functions.

The enzyme catalyses DNA(n) + a 2'-deoxyribonucleoside 5'-triphosphate = DNA(n+1) + diphosphate. In terms of biological role, in addition to polymerase activity, this DNA polymerase exhibits 3'-5' and 5'-3' exonuclease activity. It is able to utilize nicked circular duplex DNA as a template and can unwind the parental DNA strand from its template. Genetic interactions among priB, dam, lexA, nagC, polA, rdgB, rdgB, rep and uup link the PriA-PriB replication restart pathway to DNA double-strand break repair. This is DNA polymerase I (polA) from Escherichia coli (strain K12).